A 410-amino-acid polypeptide reads, in one-letter code: Multidrug resistance protein MdtM (410 aa).

The Cytoplasmic segment spans residues 1 to 11 (MPRFFTRHAAT). The chain crosses the membrane as a helical span at residues 12–32 (LFFPMALILYDFAAYLSTDLI). At 33 to 48 (QPGIINVVRDFNADVS) the chain is on the periplasmic side. A helical transmembrane segment spans residues 49–69 (LAPAAVSLYLAGGMALQWLLG). Residues 70–78 (PLSDRIGRR) lie on the Cytoplasmic side of the membrane. A helical membrane pass occupies residues 79–99 (PVLITGALIFTLACAATMFTT). Residues 100–103 (SMTQ) lie on the Periplasmic side of the membrane. A helical transmembrane segment spans residues 104–124 (FLIARAIQGTSICFIATVGYV). Topologically, residues 125 to 140 (TVQEAFGQTKGIKLMA) are cytoplasmic. The helical transmembrane segment at 141-161 (IITSIVLIAPIIGPLSGAALM) threads the bilayer. Residues 162–167 (HFMHWK) are Periplasmic-facing. Residues 168–188 (VLFAIIAVMGFISFVGLLLAM) traverse the membrane as a helical segment. Residues 189-216 (PETVKRGAVPFSAKSVLRDFRNVFCNRL) lie on the Cytoplasmic side of the membrane. Residues 217–237 (FLFGAATISLSYIPMMSWVAV) traverse the membrane as a helical segment. Topologically, residues 238–251 (SPVILIDAGSLTTS) are periplasmic. Residues 252-272 (QFAWTQVPVFGAVIVANAIVA) form a helical membrane-spanning segment. Residues 273–282 (RFVKDPTEPR) are Cytoplasmic-facing. The chain crosses the membrane as a helical span at residues 283 to 303 (FIWRAVPIQLVGLSLLIVGNL). Topologically, residues 304–307 (LSPH) are periplasmic. Residues 308–328 (VWLWSVLGTSLYAFGIGLIFP) traverse the membrane as a helical segment. Residues 329–348 (TLFRFTLFSNKLPKGTVSAS) lie on the Cytoplasmic side of the membrane. Residues 349 to 369 (LNMVILMVMSVSVEIGRWLWF) form a helical membrane-spanning segment. Residues 370 to 373 (NGGR) are Periplasmic-facing. The helical transmembrane segment at 374–394 (LPFHLLAVVAGVIVVFTLAGL) threads the bilayer. Residues 395 to 410 (LNRVRQHQAAELVEEQ) lie on the Cytoplasmic side of the membrane.

The protein belongs to the major facilitator superfamily. As to quaternary structure, monomer.

The protein resides in the cell inner membrane. The enzyme catalyses Na(+)(in) + 2 H(+)(out) = Na(+)(out) + 2 H(+)(in). It carries out the reaction K(+)(in) + H(+)(out) = K(+)(out) + H(+)(in). Efflux is inhibited by the ionophore carbonyl cyanide 3-chlorophenylhydrazone (CCCP). In terms of biological role, proton-dependent efflux pump. Confers resistance to a broad spectrum of chemically unrelated substrates. Overexpression confers resistance to acriflavine, chloramphenicol, norfloxacin, ethidium bromide and tetraphenylphosphonium bromide (TPP). Can also export a broad range of quaternary ammonium compounds (QACs) and contribute to the intrinsic resistance of E.coli to these antimicrobial compounds. In addition to its role in multidrug resistance, MdtM likely plays a physiological role in alkaline pH homeostasis and in resistance to bile salts. May function in alkaline pH homeostasis when millimolar concentrations of sodium or potassium are present in the growth medium. When overexpressed, can confer a tolerance to alkaline pH values up to 9.75. Probably acts as a low-affinity antiporter that catalyzes the exchange of internal Na(+) and K(+) cations for extracellular protons to maintain a stable internal pH, acid relative to outside, during exposure to alkaline environments. Can also catalyze Rb(+)/H(+) and Li(+)/H(+) antiport, but not Ca(2+)/H(+) exchange. The exact stoichiometry of antiport is unknown. Finally, it could contribute to bile salt resistance by catalyzing the transport of bile salts out of the cell cytoplasm. Mediates a bile salt/H(+) exchange driven by the electrochemical gradient. Binds to cholate and deoxycholate with micromolar affinity and catalyzes both cholate/H(+) and deoxycholate/H(+) exchange reactions. This chain is Multidrug resistance protein MdtM, found in Escherichia coli (strain K12).